Consider the following 309-residue polypeptide: Glycine-rich RNA-binding protein 3, mitochondrial (309 aa).

The transit peptide at 1-37 (MAFLSKFGNILKQTTNKQLNAQVSLSSPSLFQAIRCM) directs the protein to the mitochondrion. Positions 40–118 (SKLFIGGMAY…RVVKVNYAND (79 aa)) constitute an RRM domain. The interval 247 to 309 (FAGDSQFGGS…GEFEDVAKRA (63 aa)) is disordered. Positions 258–273 (VGNSSQFGGDNTQFTA) are enriched in polar residues.

Belongs to the GR-RBP family. In terms of assembly, homodimer. Interacts with ORRM2 and MORF8/RIP1. Interacts with RBG5/ORRM4. Binds to RBG2/ORRM5.

The protein localises to the mitochondrion. Possibly has a role in RNA transcription or processing during stress. Involved in C-to-U editing of mitochondrial RNA. Functions as a minor mitochondrial editing factor. Controls 6 percent of the mitochondrial editing sites. The chain is Glycine-rich RNA-binding protein 3, mitochondrial from Arabidopsis thaliana (Mouse-ear cress).